We begin with the raw amino-acid sequence, 62 residues long: Large ribosomal subunit protein uL29 (62 aa).

It belongs to the universal ribosomal protein uL29 family.

The chain is Large ribosomal subunit protein uL29 from Geobacter sulfurreducens (strain ATCC 51573 / DSM 12127 / PCA).